Consider the following 1342-residue polypeptide: DNA-directed RNA polymerase subunit beta (1342 aa).

Residues Lys1022 and Lys1200 each carry the N6-acetyllysine modification.

This sequence belongs to the RNA polymerase beta chain family. The RNAP catalytic core consists of 2 alpha, 1 beta, 1 beta' and 1 omega subunit. When a sigma factor is associated with the core the holoenzyme is formed, which can initiate transcription.

It catalyses the reaction RNA(n) + a ribonucleoside 5'-triphosphate = RNA(n+1) + diphosphate. Its function is as follows. DNA-dependent RNA polymerase catalyzes the transcription of DNA into RNA using the four ribonucleoside triphosphates as substrates. The sequence is that of DNA-directed RNA polymerase subunit beta from Escherichia coli O6:K15:H31 (strain 536 / UPEC).